We begin with the raw amino-acid sequence, 356 residues long: uncharacterized protein (356 aa).

Residues 25–72 (EENNQENNKKFIEEFYPDKESDKNFSDDDSDDSDDSDDSENSDEEFDN) are disordered. Residues 31–50 (NNKKFIEEFYPDKESDKNFS) are compositionally biased toward basic and acidic residues. Positions 51–70 (DDDSDDSDDSDDSENSDEEF) are enriched in acidic residues. A coiled-coil region spans residues 328–356 (EDTLNHSHSNKIKELENKITELKYQNEIN).

The protein belongs to the mimivirus L17/R827 family.

This is an uncharacterized protein from Acanthamoeba polyphaga mimivirus (APMV).